The following is a 267-amino-acid chain: Small ribosomal subunit protein uS3 (267 aa).

In terms of domain architecture, KH type-2 spans 43 to 111 (IRKEMSKDLE…QVQLNIFEVK (69 aa)). The interval 216 to 267 (FEEQQAQQNNRPGRRGGDRRPRRGNRSAAPQAAEAPKAEAPAEAAPAAETKE) is disordered. Low complexity predominate over residues 241-267 (RSAAPQAAEAPKAEAPAEAAPAAETKE).

This sequence belongs to the universal ribosomal protein uS3 family. In terms of assembly, part of the 30S ribosomal subunit. Forms a tight complex with proteins S10 and S14.

Functionally, binds the lower part of the 30S subunit head. Binds mRNA in the 70S ribosome, positioning it for translation. The chain is Small ribosomal subunit protein uS3 from Bifidobacterium longum (strain DJO10A).